The sequence spans 1415 residues: DNA-directed RNA polymerase subunit beta' (1415 aa).

Cys70, Cys72, Cys85, and Cys88 together coordinate Zn(2+). Residues Asp461, Asp463, and Asp465 each coordinate Mg(2+). Zn(2+) contacts are provided by Cys820, Cys894, Cys901, and Cys904. Residues Glu1382–Ala1415 form a disordered region.

This sequence belongs to the RNA polymerase beta' chain family. The RNAP catalytic core consists of 2 alpha, 1 beta, 1 beta' and 1 omega subunit. When a sigma factor is associated with the core the holoenzyme is formed, which can initiate transcription. The cofactor is Mg(2+). Zn(2+) is required as a cofactor.

The enzyme catalyses RNA(n) + a ribonucleoside 5'-triphosphate = RNA(n+1) + diphosphate. Its function is as follows. DNA-dependent RNA polymerase catalyzes the transcription of DNA into RNA using the four ribonucleoside triphosphates as substrates. This is DNA-directed RNA polymerase subunit beta' from Cupriavidus pinatubonensis (strain JMP 134 / LMG 1197) (Cupriavidus necator (strain JMP 134)).